Here is a 2090-residue protein sequence, read N- to C-terminus: Host cell factor 1 (2090 aa).

Residue alanine 2 is modified to N-acetylalanine. Serine 6 carries the phosphoserine modification. Kelch repeat units lie at residues 44-89, 93-140, 148-194, 217-265, and 266-313; these read LIVV…GFVC, RLLV…RLGH, KCYL…ITYG, KLVI…TIGN, and KMYV…LMDT. Residues lysine 105, lysine 163, and lysine 244 each participate in a glycyl lysine isopeptide (Lys-Gly) (interchain with G-Cter in ubiquitin) cross-link. Lysine 282 participates in a covalent cross-link: Glycyl lysine isopeptide (Lys-Gly) (interchain with G-Cter in SUMO2). Lysine 288 carries the N6-acetyllysine modification. Lysine 363 is covalently cross-linked (Glycyl lysine isopeptide (Lys-Gly) (interchain with G-Cter in ubiquitin)). The 104-residue stretch at 366-469 folds into the Fibronectin type-III 1 domain; that stretch reads PPARVQLVRA…TIQVLPTVPG (104 aa). Residues 407–434 are disordered; the sequence is ATATSPTPNPVPSVPANPPKSPAPAAAA. Serine 411 carries the post-translational modification Phosphoserine. Residues 413–428 show a composition bias toward pro residues; that stretch reads TPNPVPSVPANPPKSP. Residues 500-550 form a required for interaction with OGT region; sequence LVTMRPAGQAGKAPVTVTSLPASVRMVVPTQSAQGTVIGSNPQMSGMAALA. Residues arginine 504 and arginine 524 each carry the omega-N-methylarginine modification. Residues serine 598, serine 666, and serine 669 each carry the phosphoserine modification. Positions 610-722 are interaction with SIN3A; it reads LKTAAAQVGT…KGPLPAGTIL (113 aa). The segment at 750–902 is interaction with ZBTB17; sequence ILGISSVSPS…SLAGAGAHST (153 aa). An N6-acetyllysine modification is found at lysine 813. The interval 813 to 912 is interaction with GABP2; the sequence is KIITAVPKIA…SASLATPITT (100 aa). HCF repeat repeat units lie at residues 1010–1035, 1072–1097, and 1101–1126; these read TLVC…TVVA, VRVC…ATSN, and QHGC…AMSS. Residues 1098–1140 are disordered; that stretch reads MAGQHGCSNPPCETHETGTTSTATTAMSSMGTGQQRDTRHTSS. Residues 1114–1130 show a composition bias toward low complexity; sequence TGTTSTATTAMSSMGTG. One copy of the HCF repeat 4; degenerate repeat lies at 1157 to 1182; that stretch reads TQGTVKPQCQTQQANMTNTTMTVQAT. The residue at position 1204 (serine 1204) is a Phosphoserine. Arginine 1216 carries the post-translational modification Asymmetric dimethylarginine. At serine 1223 the chain carries Phosphoserine. HCF repeat repeat units lie at residues 1295-1320 and 1323-1348; these read TQVC…SNAG and QRVC…ATSN. 2 disordered regions span residues 1302–1374 and 1444–1486; these read PCET…TTST and TVTS…TTVS. Residues 1308–1321 show a composition bias toward low complexity; the sequence is TGTTNTATTSNAGS. The stretch at 1358 to 1383 is one HCF repeat 7; degenerate repeat; the sequence is QQPAGGRPCETHQTTSTGTTMSVSVG. The HCF repeat 8 repeat unit spans residues 1423-1448; sequence QRVCSNPPCETHETGTTHTATTVTSN. Polar residues predominate over residues 1465–1475; the sequence is VVSTQGDSANI. Residues 1476-1486 show a composition bias toward low complexity; that stretch reads TSSSGITTTVS. Phosphothreonine is present on threonine 1500. Residues serine 1506, serine 1559, and serine 1826 each carry the phosphoserine modification. Fibronectin type-III domains are found at residues 1853-1943 and 1945-2061; these read PPPP…TCLP and FPGA…TSKD. Residues lysine 1862 and lysine 1863 each participate in a glycyl lysine isopeptide (Lys-Gly) (interchain with G-Cter in ubiquitin) cross-link. A Phosphoserine modification is found at serine 1893. The interval 2049 to 2090 is disordered; it reads ATQVRWLQETSKDSSGTKPASKRPMSSPEMKSAPKKSKADGQ. Lysine 2060 carries the N6-acetyllysine modification. A Glycyl lysine isopeptide (Lys-Gly) (interchain with G-Cter in SUMO2) cross-link involves residue lysine 2079.

As to quaternary structure, composed predominantly of six polypeptides ranging from 110 to 150 kDa and a minor 300 kDa polypeptide. The majority of N- and C-terminal cleavage products remain tightly, albeit non-covalently, associated. Interacts with POU2F1, CREB3, ZBTB17, EGR2, E2F4, CREBZF, SP1, GABP2, Sin3 HDAC complex (SIN3A, HDAC1, HDAC2, SUDS3), SAP30, SIN3B and FHL2. Component of a MLL1 complex, composed of at least the core components KMT2A/MLL1, ASH2L, HCFC1, WDR5 and RBBP5, as well as the facultative components BACC1, CHD8, DPY30, E2F6, HCFC2, HSP70, INO80C, KANSL1, LAS1L, MAX, MCRS1, MEN1, MGA, KAT8, PELP1, PHF20, PRP31, RING2, RUVBL1, RUVBL2, SENP3, TAF1, TAF4, TAF6, TAF7, TAF9 and TEX10. Component of a THAP1/THAP3-HCFC1-OGT complex that is required for the regulation of the transcriptional activity of RRM1. Interacts directly with THAP3 (via its HBM). Interacts (via the Kelch-repeat domain) with THAP1 (via the HBM); the interaction recruits HCHC1 to the RRM1. Interacts directly with OGT; the interaction, which requires the HCFC1 cleavage site domain, glycosylates and promotes the proteolytic processing of HCFC1 and retains OGT in the nucleus. Component of the SET1 complex, at least composed of the catalytic subunit (SETD1A or SETD1B), WDR5, WDR82, RBBP5, ASH2L, CXXC1, HCFC1 and DPY30. Component of the NSL complex at least composed of MOF/KAT8, KANSL1, KANSL2, KANSL3, MCRS1, PHF20, OGT1/OGT, WDR5 and HCFC1. Component of a complex at least composed of ZNF335, HCFC1, CCAR2, EMSY, MKI67, RBBP5, ASH2L and WDR5; the complex is formed as a result of interactions between components of a nuclear receptor-mediated transcription complex and a histone methylation complex. Within the complex interacts with ZNF335. Interacts with TET2 and TET3. Interacts with HCFC1R1. Interacts with THAP11. Interacts (via Kelch domain) with KMT2E (via HBM motif). Interacts with E2F1. Accessory scaffold component of the polycomb repressive deubiquitinase (PR-DUB) complex, at least composed of BAP1, one of ASXL1, ASXL2 or (probably) ASXL3 and one of MBD5 or MBD6; the PR-DUB core associates with a number of accessory proteins, including FOXK1, FOXK2, KDM1B, HCFC1, YY1 and OGT. Interacts with YY1 (via Gly-rich region); the interaction is direct. Interacts with BAP1 (via HBM-like motif). Post-translationally, proteolytically cleaved at one or several PPCE--THET sites within the HCF repeats. Cleavage is promoted by O-glycosylation. Further cleavage of the primary N- and C-terminal chains results in a 'trimming' and accumulation of the smaller chains. Cleavage is promoted by O-glycosylation. In terms of processing, O-glycosylated. GlcNAcylation by OGT promotes proteolytic processing. Ubiquitinated. Lys-1862 and Lys-1863 are ubiquitinated both via 'Lys-48'- and 'Lys-63'-linked polyubiquitin chains. BAP1 mediated deubiquitination of 'Lys-48'-linked polyubiquitin chains; deubiquitination by BAP1 does not seem to stabilize the protein.

Its subcellular location is the cytoplasm. The protein localises to the nucleus. Transcriptional coregulator. Serves as a scaffold protein, bridging interactions between transcription factors, including THAP11 and ZNF143, and transcriptional coregulators. Involved in control of the cell cycle. Also antagonizes transactivation by ZBTB17 and GABP2; represses ZBTB17 activation of the p15(INK4b) promoter and inhibits its ability to recruit p300. Coactivator for EGR2 and GABP2. Tethers the chromatin modifying Set1/Ash2 histone H3 'Lys-4' methyltransferase (H3K4me) and Sin3 histone deacetylase (HDAC) complexes (involved in the activation and repression of transcription respectively) together. As part of the NSL complex it may be involved in acetylation of nucleosomal histone H4 on several lysine residues. Recruits KMT2E to E2F1 responsive promoters promoting transcriptional activation and thereby facilitates G1 to S phase transition. Modulates expression of homeobox protein PDX1, perhaps acting in concert with transcription factor E2F1, thereby regulating pancreatic beta-cell growth and glucose-stimulated insulin secretion. May negatively modulate transcriptional activity of FOXO3. The sequence is that of Host cell factor 1 from Mesocricetus auratus (Golden hamster).